The following is a 459-amino-acid chain: tRNA modification GTPase MnmE (459 aa).

The (6S)-5-formyl-5,6,7,8-tetrahydrofolate site is built by R20, E85, and R124. In terms of domain architecture, TrmE-type G spans 221-380; it reads GLSTVIIGRP…LEMAIQSLFF (160 aa). N231 is a binding site for K(+). Residues 231–236, 250–256, and 275–278 each bind GTP; these read NVGKSS, TDIPGTT, and DTAG. Residue S235 participates in Mg(2+) binding. The K(+) site is built by T250, I252, and T255. T256 lines the Mg(2+) pocket. A (6S)-5-formyl-5,6,7,8-tetrahydrofolate-binding site is contributed by K459.

This sequence belongs to the TRAFAC class TrmE-Era-EngA-EngB-Septin-like GTPase superfamily. TrmE GTPase family. Homodimer. Heterotetramer of two MnmE and two MnmG subunits. The cofactor is K(+).

The protein localises to the cytoplasm. Its function is as follows. Exhibits a very high intrinsic GTPase hydrolysis rate. Involved in the addition of a carboxymethylaminomethyl (cmnm) group at the wobble position (U34) of certain tRNAs, forming tRNA-cmnm(5)s(2)U34. This chain is tRNA modification GTPase MnmE, found in Bacillus pumilus (strain SAFR-032).